Reading from the N-terminus, the 326-residue chain is tRNA-modifying protein YgfZ (326 aa).

Residues Trp-27 and Trp-189 each coordinate folate.

It belongs to the tRNA-modifying YgfZ family.

Its subcellular location is the cytoplasm. Folate-binding protein involved in regulating the level of ATP-DnaA and in the modification of some tRNAs. It is probably a key factor in regulatory networks that act via tRNA modification, such as initiation of chromosomal replication. The sequence is that of tRNA-modifying protein YgfZ from Escherichia coli (strain SMS-3-5 / SECEC).